Here is an 825-residue protein sequence, read N- to C-terminus: Extracellular exo-alpha-L-arabinofuranosidase (825 aa).

An N-terminal signal peptide occupies residues 1–29; the sequence is MSRIRWRYGTAATALLVAAGLVPTATAHA. E58 contributes to the alpha-L-arabinofuranose binding site. Residues 70–215 enclose the CBM-cenC domain; the sequence is AELVQNRSFE…ALDMVSLFPR (146 aa). Residues C247 and 379–380 contribute to the alpha-L-arabinofuranose site; that span reads NE. The active-site Proton donor/acceptor is E380.

The protein belongs to the glycosyl hydrolase 51 family.

Its subcellular location is the secreted. The enzyme catalyses Hydrolysis of terminal non-reducing alpha-L-arabinofuranoside residues in alpha-L-arabinosides.. Functionally, involved in the degradation of arabinan and is a key enzyme in the complete degradation of the plant cell wall. Catalyzes the cleavage of terminal alpha-L-arabinofuranosyl residues of arabinan present in the arabinofuranosyl polysaccharides or oligosaccharides. It cannot act on other arabinose-containing polysaccharides and arabinoxylo-oligosaccharides. It leaves most of the polymer intact, including most of the main-chain residues and the arabinose side chains. It acts preferentially on the linear alpha-(1-&gt;2)-linked arabinofuranobiosides and alpha-(1-&gt;3)-linked arabinofuranobiosides, and is much less effective on alpha-(1-&gt;5)-linked arabinofuranobiosides. It also hydrolyzes the terminal alpha-(1-&gt;3)-linked arabinofuranotriosides in preference to the alpha-(1-&gt;5)-linked arabinofuranotriosides. The sequence is that of Extracellular exo-alpha-L-arabinofuranosidase from Streptomyces chartreusis.